The chain runs to 265 residues: Imidazole glycerol phosphate synthase subunit HisF (265 aa).

Residues aspartate 12 and aspartate 131 contribute to the active site.

Belongs to the HisA/HisF family. Heterodimer of HisH and HisF.

It localises to the cytoplasm. It catalyses the reaction 5-[(5-phospho-1-deoxy-D-ribulos-1-ylimino)methylamino]-1-(5-phospho-beta-D-ribosyl)imidazole-4-carboxamide + L-glutamine = D-erythro-1-(imidazol-4-yl)glycerol 3-phosphate + 5-amino-1-(5-phospho-beta-D-ribosyl)imidazole-4-carboxamide + L-glutamate + H(+). The protein operates within amino-acid biosynthesis; L-histidine biosynthesis; L-histidine from 5-phospho-alpha-D-ribose 1-diphosphate: step 5/9. Its function is as follows. IGPS catalyzes the conversion of PRFAR and glutamine to IGP, AICAR and glutamate. The HisF subunit catalyzes the cyclization activity that produces IGP and AICAR from PRFAR using the ammonia provided by the HisH subunit. This chain is Imidazole glycerol phosphate synthase subunit HisF, found in Alkalilimnicola ehrlichii (strain ATCC BAA-1101 / DSM 17681 / MLHE-1).